Consider the following 232-residue polypeptide: Ion-translocating oxidoreductase complex subunit E (232 aa).

Helical transmembrane passes span glycine 18–alanine 38, leucine 39–valine 59, isoleucine 69–alanine 89, glycine 93–glycine 113, alanine 127–alanine 147, and proline 182–leucine 202.

The protein belongs to the NqrDE/RnfAE family. In terms of assembly, the complex is composed of six subunits: RnfA, RnfB, RnfC, RnfD, RnfE and RnfG.

It is found in the cell inner membrane. Part of a membrane-bound complex that couples electron transfer with translocation of ions across the membrane. This is Ion-translocating oxidoreductase complex subunit E from Shewanella sp. (strain MR-4).